The sequence spans 379 residues: MSTTKRCYYETLEVERSADESTLKSAFRKLAMKWHPDRNPGDASSEIKFKEINEAYEVLKDGDKRAAYDRYGHAAFEQGMGGGGPGFGAGFASSFSDIFEDLFGMAGQRGRGTGRERGADLRYNMEITLEDAYKGKTAQIEIPVSVTCESCSGTGAKAGTKPKTCSTCGGAGRVRQAQGFFTLERTCPSCQGRGQIIEDPCPSCTGSGRVTKERTLSVNIPQGVEDGTRIRLAGEGEAGVRGGPPGDLYIFLSLASHAIFQRDGADLHCRVPISMVTAALGGEFEVPTIERGKTKVKVPSGTQTGRRFRIAGKGMPVLRSRQVGDMYVQVAVETPQNLTKKQQELLAEFEKLSSGATQPEAAGFFSKVKDFFGSRANTP.

Positions 7–72 constitute a J domain; the sequence is CYYETLEVER…DKRAAYDRYG (66 aa). The CR-type zinc finger occupies 135-213; sequence GKTAQIEIPV…CTGSGRVTKE (79 aa). Residues Cys-148, Cys-151, Cys-165, Cys-168, Cys-187, Cys-190, Cys-201, and Cys-204 each contribute to the Zn(2+) site. CXXCXGXG motif repeat units lie at residues 148–155, 165–172, 187–194, and 201–208; these read CESCSGTG, CSTCGGAG, CPSCQGRG, and CPSCTGSG.

This sequence belongs to the DnaJ family. As to quaternary structure, homodimer. Zn(2+) is required as a cofactor.

The protein resides in the cytoplasm. Its function is as follows. Participates actively in the response to hyperosmotic and heat shock by preventing the aggregation of stress-denatured proteins and by disaggregating proteins, also in an autonomous, DnaK-independent fashion. Unfolded proteins bind initially to DnaJ; upon interaction with the DnaJ-bound protein, DnaK hydrolyzes its bound ATP, resulting in the formation of a stable complex. GrpE releases ADP from DnaK; ATP binding to DnaK triggers the release of the substrate protein, thus completing the reaction cycle. Several rounds of ATP-dependent interactions between DnaJ, DnaK and GrpE are required for fully efficient folding. Also involved, together with DnaK and GrpE, in the DNA replication of plasmids through activation of initiation proteins. The sequence is that of Chaperone protein DnaJ from Rhodopseudomonas palustris (strain HaA2).